The primary structure comprises 251 residues: Imidazole glycerol phosphate synthase subunit HisF (251 aa).

Catalysis depends on residues aspartate 11 and aspartate 130.

It belongs to the HisA/HisF family. As to quaternary structure, heterodimer of HisH and HisF.

It localises to the cytoplasm. The catalysed reaction is 5-[(5-phospho-1-deoxy-D-ribulos-1-ylimino)methylamino]-1-(5-phospho-beta-D-ribosyl)imidazole-4-carboxamide + L-glutamine = D-erythro-1-(imidazol-4-yl)glycerol 3-phosphate + 5-amino-1-(5-phospho-beta-D-ribosyl)imidazole-4-carboxamide + L-glutamate + H(+). Its pathway is amino-acid biosynthesis; L-histidine biosynthesis; L-histidine from 5-phospho-alpha-D-ribose 1-diphosphate: step 5/9. Its function is as follows. IGPS catalyzes the conversion of PRFAR and glutamine to IGP, AICAR and glutamate. The HisF subunit catalyzes the cyclization activity that produces IGP and AICAR from PRFAR using the ammonia provided by the HisH subunit. This chain is Imidazole glycerol phosphate synthase subunit HisF, found in Chlorobium chlorochromatii (strain CaD3).